Here is a 350-residue protein sequence, read N- to C-terminus: Ornithine cyclodeaminase (350 aa).

Residues arginine 45 and lysine 69 each contribute to the L-ornithine site. Residues threonine 84, arginine 112, 139 to 140 (AQ), aspartate 161, threonine 202, 225 to 228 (VGGD), lysine 232, and serine 293 each bind NAD(+). An L-ornithine-binding site is contributed by arginine 112. L-ornithine is bound at residue aspartate 228. Residue aspartate 228 is the Proton donor/acceptor of the active site. Residue valine 294 participates in L-ornithine binding. Lysine 331 lines the NAD(+) pocket.

It belongs to the ornithine cyclodeaminase/mu-crystallin family. In terms of assembly, homodimer. It depends on NAD(+) as a cofactor.

It catalyses the reaction L-ornithine = L-proline + NH4(+). Its pathway is amino-acid biosynthesis; L-proline biosynthesis; L-proline from L-ornithine: step 1/1. Functionally, catalyzes the conversion of L-ornithine into L-proline with release of ammonia. Is likely involved in the L-ornithine degradation pathway that allows P.putida to utilize this compound as sole carbon and nitrogen source. In Pseudomonas putida (strain ATCC 47054 / DSM 6125 / CFBP 8728 / NCIMB 11950 / KT2440), this protein is Ornithine cyclodeaminase.